The sequence spans 56 residues: Per os infectivity factor AC110 (56 aa).

In terms of biological role, plays an essential role in the process of oral infection. May participate in the crossing of occlusion-derived virions through the host peritrophic membrane during oral infection. This chain is Per os infectivity factor AC110, found in Autographa californica nuclear polyhedrosis virus (AcMNPV).